The following is a 1391-amino-acid chain: ESX-5 secretion system protein EccC5 (1391 aa).

The next 2 helical transmembrane spans lie at 38 to 58 (WLIVVGVVVVGLLGGMVAMVF) and 65 to 85 (FGGIGSIFPLFMMVGIMMMMF). 3 consecutive FtsK domains span residues 476–678 (GELL…GAAQ), 858–1052 (QPPW…EDAK), and 1161–1354 (LAPV…DPDE). ATP is bound by residues 499–506 (GTTGSGKS), 876–883 (GAGGSGKT), and 1178–1185 (GRRECGRT).

Part of the ESX-5 / type VII secretion system (T7SS), which is composed of cytosolic and membrane components. The ESX-5 membrane complex is composed of EccB5, EccC5, EccD5 and EccE5.

The protein resides in the cell inner membrane. Its function is as follows. Part of the ESX-5 specialized secretion system, which is responsible for the secretion of EsxN and a number of PE_PGRS and PPE proteins, including PPE41. The chain is ESX-5 secretion system protein EccC5 from Mycobacterium tuberculosis (strain CDC 1551 / Oshkosh).